The primary structure comprises 64 residues: Disintegrin lebein-1-beta (64 aa).

The region spanning 1–64 is the Disintegrin domain; that stretch reads NSGNPCCDPV…SDCPRNPYKD (64 aa). Intrachain disulfides connect Cys6-Cys29, Cys20-Cys26, Cys25-Cys50, and Cys38-Cys57. Residues 42-44 carry the Cell attachment site motif; sequence RGD.

It belongs to the disintegrin family. Dimeric disintegrin subfamily. In terms of assembly, heterodimer with subunit alpha; disulfide-linked. As to expression, expressed by the venom gland.

It localises to the secreted. In terms of biological role, strongly inhibits ADP-induced platelet aggregation on human platelet-rich plasma. Also avidly binds to the laminin-binding beta-1 integrins (alpha-3/beta-1, alpha-6/beta-1, and alpha-7/beta-1) in an RGD-independent manner. In Macrovipera lebetinus (Levantine viper), this protein is Disintegrin lebein-1-beta.